Here is a 283-residue protein sequence, read N- to C-terminus: Phosphatidylglycerol--prolipoprotein diacylglyceryl transferase (283 aa).

7 helical membrane-spanning segments follow: residues 18–38, 62–82, 106–126, 136–156, 190–210, 218–238, and 252–272; these read LGGI…VVAF, YFLW…VLIY, FIGI…IASY, LLIY…FGRI, PSQL…VMWA, GLLI…AEFY, and LSMG…ILLY. Arg155 lines the a 1,2-diacyl-sn-glycero-3-phospho-(1'-sn-glycerol) pocket.

This sequence belongs to the Lgt family.

It is found in the cell inner membrane. It carries out the reaction L-cysteinyl-[prolipoprotein] + a 1,2-diacyl-sn-glycero-3-phospho-(1'-sn-glycerol) = an S-1,2-diacyl-sn-glyceryl-L-cysteinyl-[prolipoprotein] + sn-glycerol 1-phosphate + H(+). It participates in protein modification; lipoprotein biosynthesis (diacylglyceryl transfer). Catalyzes the transfer of the diacylglyceryl group from phosphatidylglycerol to the sulfhydryl group of the N-terminal cysteine of a prolipoprotein, the first step in the formation of mature lipoproteins. The polypeptide is Phosphatidylglycerol--prolipoprotein diacylglyceryl transferase (Helicobacter pylori (strain J99 / ATCC 700824) (Campylobacter pylori J99)).